Here is a 120-residue protein sequence, read N- to C-terminus: uncharacterized protein (120 aa).

Positions 79 to 120 (TGNEIPPEPEQEVVASPVTEQKKAEPSAPPKGSKKKKRGKKK) are disordered. Positions 110 to 120 (GSKKKKRGKKK) are enriched in basic residues.

This is an uncharacterized protein from Schizosaccharomyces pombe (strain 972 / ATCC 24843) (Fission yeast).